A 163-amino-acid polypeptide reads, in one-letter code: Probable ribosome biogenesis protein RLP24 (163 aa).

This sequence belongs to the eukaryotic ribosomal protein eL24 family. In terms of assembly, associated with nucleolar and cytoplasmic pre-60S particles. At the end of biogenesis it dissociates from cytoplasmic pre-60S particles and is likely to be exchanged for its ribosomal homolog, RPL24.

It is found in the nucleus. The protein resides in the nucleolus. In terms of biological role, involved in the biogenesis of the 60S ribosomal subunit. Ensures the docking of GTPBP4/NOG1 to pre-60S particles. In Homo sapiens (Human), this protein is Probable ribosome biogenesis protein RLP24 (RSL24D1).